Here is a 718-residue protein sequence, read N- to C-terminus: Polyribonucleotide nucleotidyltransferase (718 aa).

Mg(2+)-binding residues include aspartate 497 and aspartate 503. The KH domain occupies 564 to 623 (PRLLTMKIDPEQIGLVIGPGGKTIKGITEQTGSKIDIADDGTVTIAALEAEKAEKAKQII). The S1 motif domain occupies 633-701 (GEVYMGRVTR…AKGRLNLTRL (69 aa)).

The protein belongs to the polyribonucleotide nucleotidyltransferase family. The cofactor is Mg(2+).

It localises to the cytoplasm. It carries out the reaction RNA(n+1) + phosphate = RNA(n) + a ribonucleoside 5'-diphosphate. In terms of biological role, involved in mRNA degradation. Catalyzes the phosphorolysis of single-stranded polyribonucleotides processively in the 3'- to 5'-direction. This is Polyribonucleotide nucleotidyltransferase from Rippkaea orientalis (strain PCC 8801 / RF-1) (Cyanothece sp. (strain PCC 8801)).